The following is a 289-amino-acid chain: Phycobilisome 39 kDa linker polypeptide, phycocyanin-associated, rod (289 aa).

One can recognise a PBS-linker domain in the interval 2 to 180; the sequence is PITSAASRLG…LYRGYANSDR (179 aa). A disordered region spans residues 213–233; sequence SYLPSKQGTAPSRTFGRSSQG. Over residues 216–233 the composition is skewed to polar residues; the sequence is PSKQGTAPSRTFGRSSQG. A CpcD-like domain is found at 236–288; sequence PRLYRIEVTGISLPRYPKVRRSNKEFIVPYEQLSSTLQQINKLGGKVASITFA.

Belongs to the phycobilisome linker protein family.

It localises to the cellular thylakoid membrane. Rod linker protein, associated with phycocyanin. Linker polypeptides determine the state of aggregation and the location of the disk-shaped phycobiliprotein units within the phycobilisome and modulate their spectroscopic properties in order to mediate a directed and optimal energy transfer. The protein is Phycobilisome 39 kDa linker polypeptide, phycocyanin-associated, rod (cpcI2) of Microchaete diplosiphon (Fremyella diplosiphon).